We begin with the raw amino-acid sequence, 408 residues long: Phosphoglycerate kinase (408 aa).

Residues aspartate 28–asparagine 30, arginine 43, histidine 66–arginine 69, arginine 123, and arginine 163 contribute to the substrate site. Residues glutamate 334 and glycine 358 to threonine 361 contribute to the ATP site.

The protein belongs to the phosphoglycerate kinase family. As to quaternary structure, monomer.

It is found in the cytoplasm. It carries out the reaction (2R)-3-phosphoglycerate + ATP = (2R)-3-phospho-glyceroyl phosphate + ADP. Its pathway is carbohydrate degradation; glycolysis; pyruvate from D-glyceraldehyde 3-phosphate: step 2/5. This Pyrobaculum aerophilum (strain ATCC 51768 / DSM 7523 / JCM 9630 / CIP 104966 / NBRC 100827 / IM2) protein is Phosphoglycerate kinase.